The following is a 1148-amino-acid chain: Small G protein signaling modulator 1 (1148 aa).

The 155-residue stretch at 36–190 (HEDSSHIISF…EYTKMKTADH (155 aa)) folds into the RUN domain. Residues 256–297 (LLYGKNNVLVQPRDDMEAVPGYLSLHQTADVMTLKWTPNQLM) form an important for interaction with RAB9A and RAB9B region. The interval 301–350 (VGDLDYEKSVYWDYAMTIRLEEIVYLHCHQQVDSGGTVVLVSQDGIQRPP) is required for interaction with RAP family members. 3 disordered regions span residues 377–411 (DPPL…DKDD), 700–830 (DSTI…PREE), and 871–894 (GWRS…EEPE). Over residues 385 to 397 (GKGKVFPKLRKRS) the composition is skewed to basic residues. The Rab-GAP TBC domain maps to 617-1081 (GIQPEIRKAV…LVWETIWAAK (465 aa)). Over residues 702-716 (TISNESSQSCSSGRQ) the composition is skewed to polar residues. Basic and acidic residues predominate over residues 742 to 751 (AEGRLEEKQP). Positions 757-802 (NLVNGTCSPDSGHPSSHNFSSGLSEHSEPSLSTEDSVLDAQRNTPT) are enriched in polar residues. Composition is skewed to basic and acidic residues over residues 805-816 (RPRDGSVDDRQS) and 871-883 (GWRS…HGQA). The segment covering 884–894 (DSEDNLSEEPE) has biased composition (acidic residues).

Belongs to the RUTBC family. Interacts with RAB9A (GTP-bound form) and RAB9B (GTP-bound form); has much lower affinity for GDP-bound RAB9A and RAB9B. Interacts with RAB3A, RAB4A, RAB5A, RAB8A, RAB11A, RAP1A, RAP1B, RAP2A and RAP2B. No interaction with RAB27A. In terms of tissue distribution, mainly expressed in brain, heart and testis.

It localises to the golgi apparatus. The protein resides in the trans-Golgi network. The protein localises to the cytoplasmic vesicle membrane. It is found in the cytoplasm. Its function is as follows. Interacts with numerous Rab family members, functioning as Rab effector for some, and as GTPase activator for others. Promotes GTP hydrolysis by RAB34 and RAB36. Probably functions as a GTPase effector with RAB9A and RAB9B; does not stimulate GTP hydrolysis with RAB9A and RAB9B. The sequence is that of Small G protein signaling modulator 1 (SGSM1) from Homo sapiens (Human).